We begin with the raw amino-acid sequence, 22 residues long: Peroxidase 5 (22 aa).

It belongs to the peroxidase family. Classical plant (class III) peroxidase subfamily. It depends on heme b as a cofactor. Ca(2+) is required as a cofactor.

The protein localises to the secreted. It localises to the cell wall. It carries out the reaction 2 a phenolic donor + H2O2 = 2 a phenolic radical donor + 2 H2O. Removal of H(2)O(2), oxidation of toxic reductants, biosynthesis and degradation of lignin, suberization, auxin catabolism, response to environmental stresses such as wounding, pathogen attack and oxidative stress. These functions might be dependent on each isozyme/isoform in each plant tissue. In Cycas revoluta (Sago palm), this protein is Peroxidase 5.